We begin with the raw amino-acid sequence, 335 residues long: Probable cytosolic iron-sulfur protein assembly protein Ciao1 (335 aa).

WD repeat units follow at residues G12–K51, G57–N96, G101–C140, P146–D185, S192–G231, Q250–E289, and A301–E335.

The protein belongs to the WD repeat CIA1 family. Conjugated to URM1, a ubiquitin-like protein.

In terms of biological role, essential component of the cytosolic iron-sulfur (Fe/S) protein assembly machinery. Required for the maturation of extramitochondrial Fe/S proteins. This chain is Probable cytosolic iron-sulfur protein assembly protein Ciao1, found in Drosophila melanogaster (Fruit fly).